Reading from the N-terminus, the 166-residue chain is UPF0178 protein BPUM_2255 (166 aa).

This sequence belongs to the UPF0178 family.

The chain is UPF0178 protein BPUM_2255 from Bacillus pumilus (strain SAFR-032).